Reading from the N-terminus, the 426-residue chain is Serine--tRNA ligase (426 aa).

233–235 lines the L-serine pocket; it reads TAE. 264-266 lines the ATP pocket; the sequence is RSE. Position 287 (glutamate 287) interacts with L-serine. 351-354 contacts ATP; the sequence is EISS. Residue serine 385 participates in L-serine binding.

It belongs to the class-II aminoacyl-tRNA synthetase family. Type-1 seryl-tRNA synthetase subfamily. As to quaternary structure, homodimer. The tRNA molecule binds across the dimer.

Its subcellular location is the cytoplasm. It carries out the reaction tRNA(Ser) + L-serine + ATP = L-seryl-tRNA(Ser) + AMP + diphosphate + H(+). The enzyme catalyses tRNA(Sec) + L-serine + ATP = L-seryl-tRNA(Sec) + AMP + diphosphate + H(+). Its pathway is aminoacyl-tRNA biosynthesis; selenocysteinyl-tRNA(Sec) biosynthesis; L-seryl-tRNA(Sec) from L-serine and tRNA(Sec): step 1/1. In terms of biological role, catalyzes the attachment of serine to tRNA(Ser). Is also able to aminoacylate tRNA(Sec) with serine, to form the misacylated tRNA L-seryl-tRNA(Sec), which will be further converted into selenocysteinyl-tRNA(Sec). In Brachyspira hyodysenteriae (strain ATCC 49526 / WA1), this protein is Serine--tRNA ligase.